The chain runs to 184 residues: Photosynthetic apparatus regulatory protein RegA (184 aa).

The Response regulatory domain occupies 14–128; it reads SLLLVDDDEP…EVTHALLAKG (115 aa).

In terms of processing, phosphorylated by RegB.

Member of the two-component regulatory system RegB/RegA. Involved in transactivating anaerobic expression of the photosynthetic apparatus. It is a transcriptional regulator that is responsible for activating expression of the puf, puh, and puc operons in response to a decrease in oxygen tension. This Cereibacter sphaeroides (strain ATCC 17023 / DSM 158 / JCM 6121 / CCUG 31486 / LMG 2827 / NBRC 12203 / NCIMB 8253 / ATH 2.4.1.) (Rhodobacter sphaeroides) protein is Photosynthetic apparatus regulatory protein RegA (regA).